The primary structure comprises 218 residues: Glutathione S-transferase class-mu 26 kDa isozyme 7 (218 aa).

The region spanning 2 to 83 (PAKLGYWKIR…YIADKHGMLG (82 aa)) is the GST N-terminal domain. Residues 7–8 (YW), 41–45 (WLGDK), 54–55 (NL), and 67–68 (QS) contribute to the glutathione site. The GST C-terminal domain occupies 85–203 (TPEERARISM…KSERFIKWPL (119 aa)). A substrate-binding site is contributed by Y111.

Belongs to the GST superfamily. Mu family. Homodimer.

It catalyses the reaction RX + glutathione = an S-substituted glutathione + a halide anion + H(+). Functionally, conjugation of reduced glutathione to a wide number of exogenous and endogenous hydrophobic electrophiles. Its function is as follows. GST isoenzymes appear to play a central role in the parasite detoxification system. Other functions are also suspected including a role in increasing the solubility of haematin in the parasite gut. The sequence is that of Glutathione S-transferase class-mu 26 kDa isozyme 7 from Fasciola hepatica (Liver fluke).